We begin with the raw amino-acid sequence, 266 residues long: Phosphatidate cytidylyltransferase (266 aa).

Helical transmembrane passes span 16 to 36 (VVLI…LFWA), 52 to 72 (LFQV…WVAA), 78 to 98 (PVEC…YQKA), 101 to 121 (SEAI…FGVY), 125 to 145 (GAVA…GAFF), 164 to 184 (LEGA…VGMG), 186 to 206 (LSGG…MAVF), and 237 to 257 (LDSM…LEIW).

The protein belongs to the CDS family.

It is found in the cell inner membrane. The enzyme catalyses a 1,2-diacyl-sn-glycero-3-phosphate + CTP + H(+) = a CDP-1,2-diacyl-sn-glycerol + diphosphate. The protein operates within phospholipid metabolism; CDP-diacylglycerol biosynthesis; CDP-diacylglycerol from sn-glycerol 3-phosphate: step 3/3. The polypeptide is Phosphatidate cytidylyltransferase (cdsA) (Helicobacter pylori (strain J99 / ATCC 700824) (Campylobacter pylori J99)).